The following is a 439-amino-acid chain: Guanine deaminase (439 aa).

Residues His82 and His84 each coordinate Zn(2+). Residues 84 to 87 (HYPQ), 209 to 210 (RF), 237 to 240 (HLCE), and Asp327 each bind substrate. Residues His237 and Asp327 each contribute to the Zn(2+) site.

It belongs to the metallo-dependent hydrolases superfamily. ATZ/TRZ family. Requires Zn(2+) as cofactor.

The enzyme catalyses guanine + H2O + H(+) = xanthine + NH4(+). The protein operates within purine metabolism; guanine degradation; xanthine from guanine: step 1/1. Functionally, catalyzes the hydrolytic deamination of guanine, producing xanthine and ammonia. The protein is Guanine deaminase (guaD) of Escherichia coli (strain K12).